The following is a 698-amino-acid chain: eEF1A lysine and N-terminal methyltransferase (698 aa).

An N-acetylmethionine modification is found at methionine 1. Residue serine 267 is modified to Phosphoserine. The interval 431–461 (KDTSHRAQKKRKKDRKKQRPADTSEDFPPAP) is disordered. Residues 436-448 (RAQKKRKKDRKKQ) are compositionally biased toward basic residues.

It belongs to the methyltransferase superfamily. As to quaternary structure, forms a tripartite complex containing GAB1, METTL13 and SPRY2. Within the complex interacts with GAB1 and SPRY2. In terms of tissue distribution, expressed in the inner ear (at protein level). Expression is detected in the cochlear duct, spiral limbus region, efferent and afferent nerves, and in spiral ganglion neurons (at protein level).

It is found in the cytoplasm. It localises to the nucleus. The protein resides in the mitochondrion. The enzyme catalyses L-lysyl-[protein] + S-adenosyl-L-methionine = N(6)-methyl-L-lysyl-[protein] + S-adenosyl-L-homocysteine + H(+). The catalysed reaction is N(6)-methyl-L-lysyl-[protein] + S-adenosyl-L-methionine = N(6),N(6)-dimethyl-L-lysyl-[protein] + S-adenosyl-L-homocysteine + H(+). It carries out the reaction N-terminal glycyl-L-lysyl-L-glutamyl-[protein] + 3 S-adenosyl-L-methionine = N-terminal N,N,N-trimethyl-glycyl-L-lysyl-L-glutamyl-[protein] + 3 S-adenosyl-L-homocysteine + 3 H(+). In terms of biological role, dual methyltransferase that catalyzes methylation of elongation factor 1-alpha (EEF1A1 and EEF1A2) at two different positions, and is therefore involved in the regulation of mRNA translation. Via its C-terminus, methylates EEF1A1 and EEF1A2 at the N-terminal residue 'Gly-2'. Via its N-terminus dimethylates EEF1A1 and EEF1A2 at residue 'Lys-55'. Has no activity towards core histones H2A, H2B, H3 and H4. This Mus musculus (Mouse) protein is eEF1A lysine and N-terminal methyltransferase.